We begin with the raw amino-acid sequence, 417 residues long: GTP-binding protein YPT11 (417 aa).

A disordered region spans residues 1-34; sequence MSQRKRYSLNVVTSPSIPSPTPSAPIRTNESNWE. GTP contacts are provided by residues 97 to 104, 228 to 232, and 292 to 295; these read GDANVGKT, DTAGQ, and NKID. 2 S-geranylgeranyl cysteine lipidation sites follow: C415 and C416.

It belongs to the small GTPase superfamily. Rab family. As to quaternary structure, interacts with MYO2 (via C-terminal tail domain). Interacts with YIF1, YIP3, YIP4 and YIP5.

It localises to the endoplasmic reticulum membrane. The protein localises to the bud tip. The protein resides in the bud neck. In terms of biological role, involved in the positive control of both endoplasmic reticulum (ER) and mitochondrion inheritance during cell divison. Required for the MYO2-dependent retention of newly inherited mitochondria at the bud tip in developing daughter cells. The chain is GTP-binding protein YPT11 (YPT11) from Saccharomyces cerevisiae (strain AWRI1631) (Baker's yeast).